Consider the following 238-residue polypeptide: MTSRLFALIPCAGTGSRSGAAMPKQYRTVAGRDMLHYSLAAFDACSEFAQTLVVIAPDDAHFDGRRFGGLRFAVRRSGGASRQASVLNGLHALAEFGARDDDWVLVHDAARPGITPALIRTLIGALKDDPVGGIMALPVADTLKRIDATSSDGRIARTEARDGLWQAQTPQMFRIGMLREAILRAQADGHDLTDEASAIEWLGHAPKLVQGSLRNFKVTYPEDFDLAEAILSRPAAAS.

Belongs to the IspD/TarI cytidylyltransferase family. IspD subfamily.

The enzyme catalyses 2-C-methyl-D-erythritol 4-phosphate + CTP + H(+) = 4-CDP-2-C-methyl-D-erythritol + diphosphate. It participates in isoprenoid biosynthesis; isopentenyl diphosphate biosynthesis via DXP pathway; isopentenyl diphosphate from 1-deoxy-D-xylulose 5-phosphate: step 2/6. Catalyzes the formation of 4-diphosphocytidyl-2-C-methyl-D-erythritol from CTP and 2-C-methyl-D-erythritol 4-phosphate (MEP). The chain is 2-C-methyl-D-erythritol 4-phosphate cytidylyltransferase from Paraburkholderia phytofirmans (strain DSM 17436 / LMG 22146 / PsJN) (Burkholderia phytofirmans).